A 173-amino-acid polypeptide reads, in one-letter code: MADKVAVLDPEPITLLDTEDEPGISQSRRSSIANSNFYIERAFVTNCTIISGERSTPKFAVWKVTAVLHPLNPNSSGSYRIHTYKRYSDFVEFRNALLDRVRTKRPASVSEIPELPPPVKWYYSWKYNEINLNKEWLANRRKGLELFINQVLLNGNIVDIAKDLVIQFLRPRK.

The PX domain maps to Glu-40–Lys-173.

This sequence belongs to the YPT35 family.

It localises to the endosome membrane. Its subcellular location is the vacuole membrane. In terms of biological role, recruits the lipid transfer protein VPS13 to endosomal and vacuolar membranes. The protein is Endosomal/vacuolar adapter protein YPT35 (YPT35) of Candida glabrata (strain ATCC 2001 / BCRC 20586 / JCM 3761 / NBRC 0622 / NRRL Y-65 / CBS 138) (Yeast).